A 411-amino-acid chain; its full sequence is Indian hedgehog protein (411 aa).

A signal peptide spans 1-27 (MSPARLRPRLHFCLVLLLLLVVPAAWG). Cys28 carries the N-palmitoyl cysteine lipid modification. Ca(2+)-binding residues include Glu94, Glu95, Asp100, Thr130, Glu131, Asp134, and Asp136. 3 residues coordinate Zn(2+): His145, Asp152, and His187. The Cholesterol glycine ester moiety is linked to residue Gly202. An N-linked (GlcNAc...) asparagine glycan is attached at Asn282.

This sequence belongs to the hedgehog family. As to quaternary structure, multimer. Interacts with BOC and CDON. Interacts with PTCH1. Interacts with glypican GPC3. Post-translationally, cholesterylation is required for N-product targeting to lipid rafts and multimerization. The C-terminal domain displays an autoproteolysis activity and a cholesterol transferase activity. Both activities result in the cleavage of the full-length protein and covalent attachment of a cholesterol moiety to the C-terminal of the newly generated N-product. The N-product is the active species in both local and long-range signaling, whereas the C-product is degraded in the endoplasmic reticulum. In terms of processing, N-palmitoylation by HHAT of N-product is required for indian hedgehog protein N-product multimerization and full activity. In terms of tissue distribution, expressed in embryonic lung, and in adult kidney and liver.

It localises to the cell membrane. The protein localises to the endoplasmic reticulum membrane. It is found in the golgi apparatus membrane. The protein resides in the secreted. The catalysed reaction is glycyl-L-cysteinyl-[protein] + cholesterol + H(+) = [protein]-C-terminal glycyl cholesterol ester + N-terminal L-cysteinyl-[protein]. In terms of biological role, plays a role in embryonic morphogenesis; it is involved in the regulation of endochondral skeleton formation, and the development of retinal pigment epithelium (RPE), photoreceptors and periocular tissues. Its function is as follows. The C-terminal part of the indian hedgehog protein precursor displays an autoproteolysis and a cholesterol transferase activity. Both activities result in the cleavage of the full-length protein into two parts followed by the covalent attachment of a cholesterol moiety to the C-terminal of the newly generated N-product. Both activities occur in the endoplasmic reticulum. Plays a role in hedgehog paracrine signaling. Associated with the very-low-density lipoprotein (VLDL) particles to function as a circulating morphogen for endothelial cell integrity maintenance. Functionally, the dually lipidated indian hedgehog protein N-product is a morphogen which is essential for a variety of patterning events during development. Binds to the patched (PTCH1) receptor, which functions in association with smoothened (SMO), to activate the transcription of target genes. Plays a role in morphogenesis of the skeleton by coordinating growth and differentiation of the endochondral skeleton. Positively regulates PTHLH expression during endochondral bone formation preventing chondrocyte hypertrophy. In contrast, participates in normal chondrocyte proliferation in a PTHLH-independent pathway. In Homo sapiens (Human), this protein is Indian hedgehog protein.